The chain runs to 317 residues: tRNA dimethylallyltransferase (317 aa).

Position 14 to 21 (14 to 21 (GPTASGKS)) interacts with ATP. Residue 16–21 (TASGKS) participates in substrate binding. 2 interaction with substrate tRNA regions span residues 39 to 42 (DSVL) and 163 to 167 (QRIQR).

It belongs to the IPP transferase family. Monomer. The cofactor is Mg(2+).

It carries out the reaction adenosine(37) in tRNA + dimethylallyl diphosphate = N(6)-dimethylallyladenosine(37) in tRNA + diphosphate. Functionally, catalyzes the transfer of a dimethylallyl group onto the adenine at position 37 in tRNAs that read codons beginning with uridine, leading to the formation of N6-(dimethylallyl)adenosine (i(6)A). The chain is tRNA dimethylallyltransferase from Xylella fastidiosa (strain M23).